Consider the following 171-residue polypeptide: Protein FAM209A (171 aa).

A signal peptide spans 1 to 19 (MWTLKSSLVLLLCLTCSYA). Over 20-52 (FMFSSLRQKTSEPQGKVQYGEHFRIRQNLPEHT) the chain is Extracellular. Residues 53–73 (QGWLGSKWLWLLFVVVPFVIL) form a helical membrane-spanning segment. Residues 74–171 (QCQRDSEKNK…CEIWGEESSS (98 aa)) lie on the Cytoplasmic side of the membrane. The tract at residues 81 to 107 (KNKEQSPPGLRGGQLHSPLKKKRNASP) is disordered. Positions 114-139 (NTLMELEVELMKFVSKVRNLKRAMAT) form a coiled coil.

Belongs to the FAM209 family. In terms of assembly, interacts with DPY19L2. Interacts with CYLC1; the interaction may be relevant for proper acrosome attachment to the nuclear envelope.

The protein localises to the nucleus inner membrane. Its function is as follows. May play a role in sperm acrosome biogenesis. The chain is Protein FAM209A from Homo sapiens (Human).